The following is a 150-amino-acid chain: Snaclec bothrojaracin subunit beta (150 aa).

An N-terminal signal peptide occupies residues methionine 1–alanine 23. Cystine bridges form between cysteine 25/cysteine 36, cysteine 53/cysteine 146, and cysteine 123/cysteine 138. The C-type lectin domain maps to tyrosine 32–glutamate 147.

It belongs to the snaclec family. Heterodimer of subunits alpha and beta; disulfide-linked. As to expression, expressed by the venom gland.

It is found in the secreted. This potent antithrombotic agent acts in a calcium-independent manner. Exerts its anticoagulant effect by two distinct mechanisms. It binds to activated thrombin through exosite 1, blocking fibrinogen clotting, platelet activation, factor V activation and other effects, and it interacts with prothrombin (F2), decreasing its proteolytic activation -especially in the presence of factor Va. In vivo, intravenous injection before thrombosis induction causes a significant decrease in thrombus weight. Furthermore, BJC shows a prolonged effect by remaining in the plasma bound to prothrombin for at least 12 hours. This Bothrops jararaca (Jararaca) protein is Snaclec bothrojaracin subunit beta.